The following is a 66-amino-acid chain: Beta-toxin Cb2 (66 aa).

In terms of domain architecture, LCN-type CS-alpha/beta spans 1-66 (KEGYLVDLHT…VWPLPNKRCK (66 aa)). Disulfide bonds link Cys12–Cys65, Cys16–Cys41, Cys25–Cys46, and Cys29–Cys48.

The protein belongs to the long (4 C-C) scorpion toxin superfamily. Sodium channel inhibitor family. Beta subfamily. As to expression, expressed by the venom gland.

The protein localises to the secreted. Beta toxins bind voltage-independently at site-4 of sodium channels (Nav) and reduces peak current and shifts the voltage of activation toward more negative potentials thereby affecting sodium channel activation and promoting spontaneous and repetitive firing. Has an inhibitory effect on voltage-gated sodium channel hNav1.6/SCN8A, affecting both the activation and inactivation processes. Also reduces the peak current of hNav1.5/SCN5A but does not shift its voltage of activation. This toxin is active against mammals and lethal to mice. This is Beta-toxin Cb2 from Centruroides baergi (Scorpion).